Reading from the N-terminus, the 1174-residue chain is Male determiner protein Mdmd(II) (1174 aa).

Positions 1–15 are enriched in basic and acidic residues; sequence MNATDAESRKPENKP. 3 disordered regions span residues 1-51, 80-109, and 136-259; these read MNAT…SGQR, KDGSNEMLPKEDSINTNHNYTTDSNEHPVE, and KQLS…LRRS. The segment covering 16 to 35 has biased composition (low complexity); sequence SSESSSSGSTSGSSDGEVSS. Polar residues predominate over residues 36-47; that stretch reads KTYFKNNKSKVL. Basic and acidic residues predominate over residues 80–92; it reads KDGSNEMLPKEDS. The span at 93–102 shows a compositional bias: polar residues; that stretch reads INTNHNYTTD. A compositionally biased stretch (low complexity) spans 138–153; the sequence is LSAYRSRSRSTRLSYS. The span at 183–200 shows a compositional bias: basic and acidic residues; that stretch reads HGRDSSTTKRSVSRDKDN. Residues 201–223 show a composition bias toward basic residues; it reads RLRRRIGSSRSHTRSHSRFRRSE. The span at 235 to 259 shows a compositional bias: basic and acidic residues; sequence RSQERRHERRRSMSSDYERIALRRS. Residues 348-531 form the MIF4G domain; sequence KKYIHGYINK…KVLFQVRRDG (184 aa). Residues 597-608 are compositionally biased toward low complexity; the sequence is DSDGSFGSGSNS. Positions 597–616 are disordered; it reads DSDGSFGSGSNSETALSDCD. The MI domain maps to 641 to 757; sequence ALRRTIYLTL…SWDVLDCIKL (117 aa). The segment covering 840-857 has biased composition (low complexity); sequence SAPSSSSSSSLSSELSAP. 2 disordered regions span residues 840-1045 and 1095-1133; these read SAPS…SRTK and RKDNYGNRQNHEISQRHDSEIKRRREERKKRHHEKNHSR. The segment covering 869-909 has biased composition (basic residues); it reads KKKHKGKNKKMTKKKNPSKKKEKTKKIVGKNKIAAKNKTIK. Basic and acidic residues predominate over residues 910–924; it reads RRTDKDNSSSKDNFL. Over residues 926–957 the composition is skewed to low complexity; sequence SESSSNESISLDSLSSELFAPSSYSSSESSND. Basic residues predominate over residues 963 to 1001; the sequence is KHKGKNKKMTKKKNPSNKREKTKKKLSKNKKAPNKNTKK. A compositionally biased stretch (low complexity) spans 1010 to 1020; that stretch reads SSESSISESKS. A compositionally biased stretch (basic residues) spans 1034–1045; the sequence is RKKRVTSKSRTK. Over residues 1095–1118 the composition is skewed to basic and acidic residues; the sequence is RKDNYGNRQNHEISQRHDSEIKRR. The segment covering 1119–1130 has biased composition (basic residues); sequence REERKKRHHEKN.

Belongs to the CWC22 family. As to quaternary structure, component of the spliceosome C complex.

The protein localises to the nucleus speckle. In terms of biological role, male determiner protein (M-factor) that controls male somatic sexual differentiation. Acts as a dominant factor that regulates the mRNA splicing of transformer (tra) and doublesex (dsx) transcripts and promotes expression of male splice forms of tra and dsx. Probably acts as a component of the spliceosome C complex required for mRNA splicing factor and exon-junction complex (EJC) assembly. Hinders eIF4AIII from non-specifically binding RNA and escorts it to the splicing machinery to promote EJC assembly on mature mRNAs. This chain is Male determiner protein Mdmd(II), found in Musca domestica (House fly).